The following is a 546-amino-acid chain: Chaperonin GroEL (546 aa).

ATP is bound by residues 30-33, Lys51, 87-91, Gly415, 479-481, and Asp495; these read TLGP, DGTTT, and NAA. Residues 526 to 546 form a disordered region; it reads KKGDSAPAGGGMGDMGGMGMM. The segment covering 533–546 has biased composition (gly residues); that stretch reads AGGGMGDMGGMGMM.

This sequence belongs to the chaperonin (HSP60) family. In terms of assembly, forms a cylinder of 14 subunits composed of two heptameric rings stacked back-to-back. Interacts with the co-chaperonin GroES.

It localises to the cytoplasm. It carries out the reaction ATP + H2O + a folded polypeptide = ADP + phosphate + an unfolded polypeptide.. Functionally, together with its co-chaperonin GroES, plays an essential role in assisting protein folding. The GroEL-GroES system forms a nano-cage that allows encapsulation of the non-native substrate proteins and provides a physical environment optimized to promote and accelerate protein folding. The protein is Chaperonin GroEL of Thioalkalivibrio sulfidiphilus (strain HL-EbGR7).